The sequence spans 239 residues: MQDPNADTEWNDILRKKGILPPKESLKELEEEAEEEQRILQQSVVKTYEDMTLEELEDHEDEFNEEDERAIEMYRRRRLAEWKATKLKNKFGEVLEISGKDYVQEVTKAGEGLWVILHLYKQGIPLCALINQHLSGLARKFPDVKFIKAISTTCIPNYPDRNLPTIFVYLEGDIKAQFIGPLVFGGMNLTRDELEWKLSESGAIMTDLEENPKKPIEDVLLSSVRRSVLMKRDSDSEGD.

N-acetylmethionine is present on methionine 1. Residues 32–180 enclose the Phosducin domain; it reads EAEEEQRILQ…EGDIKAQFIG (149 aa). Serine 43 carries the post-translational modification Phosphoserine. Positions 91 to 239 are thioredoxin fold; sequence FGEVLEISGK…MKRDSDSEGD (149 aa). 2 interaction with XIAP regions span residues 97-99 and 153-155; these read ISG and TCI. Phosphoserine occurs at positions 234 and 236.

It belongs to the phosducin family. Interacts (via thioredoxin fold region) with KDR/VEGFR2 (via juxtamembrane domain). Forms ternary complexes with the chaperonin CCT complex and actin substrate, leading to inhibition of actin folding. Interacts with XIAP (via BIR 3 and RING domain). Interacts with HSP90AA1 and HSP90AB1. Post-translationally, N-terminal methionine acetylation destabilizes the protein. Expressed in endothelial cells (at protein level). Expressed in all tissues examined including spleen, thymus, prostate, testis, ovary, small intestine and colon.

It is found in the cytoplasm. The protein resides in the perinuclear region. Its subcellular location is the endoplasmic reticulum. Acts as a chaperone for the angiogenic VEGF receptor KDR/VEGFR2, increasing its abundance by inhibiting its ubiquitination and degradation. Inhibits the folding activity of the chaperonin-containing T-complex (CCT) which leads to inhibition of cytoskeletal actin folding. Acts as a chaperone during heat shock alongside HSP90 and HSP40/70 chaperone complexes. Modulates the activation of caspases during apoptosis. This is Phosducin-like protein 3 (PDCL3) from Homo sapiens (Human).